The chain runs to 290 residues: Pyridoxal kinase PdxY (290 aa).

Substrate contacts are provided by residues S12 and 47-48 (TQ). Residues D114, E151, K184, and 211-214 (RPLL) contribute to the ATP site. Residue D225 participates in substrate binding.

This sequence belongs to the pyridoxine kinase family. PdxY subfamily. Homodimer. Mg(2+) serves as cofactor.

It carries out the reaction pyridoxal + ATP = pyridoxal 5'-phosphate + ADP + H(+). It participates in cofactor metabolism; pyridoxal 5'-phosphate salvage; pyridoxal 5'-phosphate from pyridoxal: step 1/1. In terms of biological role, pyridoxal kinase involved in the salvage pathway of pyridoxal 5'-phosphate (PLP). Catalyzes the phosphorylation of pyridoxal to PLP. This Pseudomonas putida (strain W619) protein is Pyridoxal kinase PdxY.